The chain runs to 768 residues: Kelch domain-containing protein 7A (768 aa).

The chain crosses the membrane as a helical span at residues 12 to 29 (VVLSAAALLLVTVAYRLY). Residues 35-210 (PAQRWGGNAQ…PAPLQGSSDM (176 aa)) are disordered. Serine 77 is subject to Phosphoserine. The span at 104 to 118 (TDRKSQRKGSGEERG) shows a compositional bias: basic and acidic residues. An N-linked (GlcNAc...) asparagine glycan is attached at asparagine 248. The segment at 304 to 352 (LTEVPSPRPPPRSLGTGAASGGQAGDTKGAAERAASPQPGPSPSTRGFS) is disordered. A Kelch 1 repeat occupies 319-365 (TGAASGGQAGDTKGAAERAASPQPGPSPSTRGFSRKESLLQIAENPE). Serine 356 carries the phosphoserine modification. Positions 371 to 395 (DGFWLPAPPCPDPGALPGSGRSSQE) are disordered. Kelch repeat units follow at residues 483 to 529 (QYLV…ICSL), 532 to 580 (YLFV…ALDG), 581 to 623 (HLYA…ATAC), and 626 to 668 (EIFV…AVNG).

Its subcellular location is the membrane. This is Kelch domain-containing protein 7A (KLHDC7A) from Pongo abelii (Sumatran orangutan).